The following is a 31-amino-acid chain: Cyclotide mden-K (31 aa).

A cross-link (cyclopeptide (Gly-Asn)) is located at residues 1-31; the sequence is GSIPCGESCVWIPCISSVVGCACKNKVCYKN. 3 disulfides stabilise this stretch: cysteine 5–cysteine 21, cysteine 9–cysteine 23, and cysteine 14–cysteine 28.

It belongs to the cyclotide family. Bracelet subfamily. This is a cyclic peptide.

Functionally, probably participates in a plant defense mechanism. This chain is Cyclotide mden-K, found in Melicytus dentatus (Tree violet).